The chain runs to 406 residues: Probable sphingosine-1-phosphate phosphatase (406 aa).

Helical transmembrane passes span 66 to 86 (ILGE…CVAT) and 92 to 112 (LCVV…TFTL). A phosphatase sequence motif I region spans residues 107–115 (KNTFTLPRP). The segment at 133–136 (PSTH) is phosphatase sequence motif II. Residue His136 is the Proton donor of the active site. The next 2 membrane-spanning stretches (helical) occupy residues 138-158 (ASAF…FPTI) and 162-182 (FNIS…SVMF). A phosphatase sequence motif III region spans residues 183–194 (SRLYNGHHTPMD). The active-site Nucleophile is the His190. The next 5 membrane-spanning stretches (helical) occupy residues 193-213 (MDVI…TYQL), 225-245 (TFLF…FFHP), 254-274 (AYPE…SLWL), 313-333 (ILIG…FFFF), and 374-394 (LFVY…FYYL).

The protein belongs to the type 2 lipid phosphate phosphatase family.

The protein localises to the endoplasmic reticulum membrane. Its function is as follows. Has enzymatic activity against both sphingosine 1 phosphate (S1P) and dihydro-S1P. Regulates intracellular and extracellular S1P levels. The polypeptide is Probable sphingosine-1-phosphate phosphatase (sppA) (Dictyostelium discoideum (Social amoeba)).